A 359-amino-acid polypeptide reads, in one-letter code: Cytohesin-interacting protein (359 aa).

The 90-residue stretch at 77–166 (VVTVEKQDNG…LLTIETLNGT (90 aa)) folds into the PDZ domain. The stretch at 165–188 (GTMIHRRAELEAKLQTLKQTLKKK) forms a coiled coil. Residues 166 to 188 (TMIHRRAELEAKLQTLKQTLKKK) form an interaction with CYTH1 region.

Interacts with CYTH1 and SNX27.

The protein resides in the cytoplasm. It is found in the early endosome. Functionally, by its binding to cytohesin-1 (CYTH1), it modifies activation of ARFs by CYTH1 and its precise function may be to sequester CYTH1 in the cytoplasm. This is Cytohesin-interacting protein (Cytip) from Mus musculus (Mouse).